Consider the following 115-residue polypeptide: Hydrogenase maturation factor HypA (115 aa).

A Ni(2+)-binding site is contributed by histidine 2. Positions 74, 77, 90, and 93 each coordinate Zn(2+).

The protein belongs to the HypA/HybF family.

Functionally, involved in the maturation of [NiFe] hydrogenases. Required for nickel insertion into the metal center of the hydrogenase. This Desulfosudis oleivorans (strain DSM 6200 / JCM 39069 / Hxd3) (Desulfococcus oleovorans) protein is Hydrogenase maturation factor HypA.